The chain runs to 311 residues: Halocin-S8 (311 aa).

Propeptides lie at residues 1-230 (MSDK…IQLQ) and 267-311 (TVAC…TSFW).

Its subcellular location is the secreted. Its function is as follows. Has antibacterial activity against the haloarchaeons H.salinarium NRC817, Halobacterium GRB and H.gibbonsii. The polypeptide is Halocin-S8 (halS8) (Haloarchaeon S8a).